The chain runs to 400 residues: Sensor histidine kinase LnrJ (400 aa).

At 1–2 the chain is on the extracellular side; the sequence is MK. Residues 3 to 23 form a helical membrane-spanning segment; sequence ALFFTRMFTLMVSCLMYLSIV. The Cytoplasmic segment spans residues 24–27; it reads KEDN. The helical transmembrane segment at 28–48 threads the bilayer; that stretch reads WFGYVFIAAGAAMYAANHVLL. Topologically, residues 49–61 are extracellular; that stretch reads TKETNAIWFCLID. The chain crosses the membrane as a helical span at residues 62–82; it reads IAIGFSFGFIFPGTGLFIIML. The Cytoplasmic portion of the chain corresponds to 83–101; sequence CPVAVAFFLRGFPKRTAWS. A helical transmembrane segment spans residues 102 to 122; it reads VLCLSSILFLTVLIRTYAMFG. Residues 123 to 125 are Extracellular-facing; that stretch reads NEF. Residues 126–146 form a helical membrane-spanning segment; that stretch reads VIDHLTSMTFVVFCGVVGKLI. At 147–400 the chain is on the cytoplasmic side; it reads RKLLDAQDTA…GPVQQKESLS (254 aa). Positions 190-385 constitute a Histidine kinase domain; the sequence is IYERNRMARE…TVNAEFSLAN (196 aa). Residue His-201 is modified to Phosphohistidine; by autocatalysis.

In terms of processing, autophosphorylated.

It is found in the cell membrane. It catalyses the reaction ATP + protein L-histidine = ADP + protein N-phospho-L-histidine.. Its function is as follows. Required for resistance to linearmycins, a family of antibiotic-specialized metabolites produced by some streptomycetes. Member of the two-component regulatory system LnrJ/LnrK, which induces expression of the LnrLMN ABC transporter in response to linearmycins and other polyenes. Acts as a specific sensor for linearmycin, either directly through binding or indirectly through membrane perturbation. Probably activates LnrK by phosphorylation. May also promote biofilm formation. This Bacillus subtilis (strain 168) protein is Sensor histidine kinase LnrJ.